The chain runs to 424 residues: Light-independent protochlorophyllide reductase subunit N (424 aa).

Residues C16, C41, and C102 each contribute to the [4Fe-4S] cluster site.

It belongs to the BchN/ChlN family. Protochlorophyllide reductase is composed of three subunits; ChlL, ChlN and ChlB. Forms a heterotetramer of two ChlB and two ChlN subunits. [4Fe-4S] cluster serves as cofactor.

The catalysed reaction is chlorophyllide a + oxidized 2[4Fe-4S]-[ferredoxin] + 2 ADP + 2 phosphate = protochlorophyllide a + reduced 2[4Fe-4S]-[ferredoxin] + 2 ATP + 2 H2O. It participates in porphyrin-containing compound metabolism; chlorophyll biosynthesis (light-independent). Functionally, component of the dark-operative protochlorophyllide reductase (DPOR) that uses Mg-ATP and reduced ferredoxin to reduce ring D of protochlorophyllide (Pchlide) to form chlorophyllide a (Chlide). This reaction is light-independent. The NB-protein (ChlN-ChlB) is the catalytic component of the complex. The protein is Light-independent protochlorophyllide reductase subunit N of Synechococcus sp. (strain WH7803).